A 335-amino-acid polypeptide reads, in one-letter code: uncharacterized protein (335 aa).

3 disordered regions span residues 153-174, 218-239, and 254-295; these read LNDKEDEEKLDQTTESEESDRI, HTSVRRSMSSVSSSASSTQEEV, and RCKV…PVTS. Residues 156-170 are compositionally biased toward acidic residues; sequence KEDEEKLDQTTESEE. Composition is skewed to low complexity over residues 222–234 and 275–295; these read RRSMSSVSSSASS and THTSVSSLSVHSVSPTPPVTS.

This is an uncharacterized protein from Caenorhabditis elegans.